We begin with the raw amino-acid sequence, 315 residues long: Methionyl-tRNA formyltransferase (315 aa).

A (6S)-5,6,7,8-tetrahydrofolate-binding site is contributed by 113-116; that stretch reads SLLP.

It belongs to the Fmt family.

The catalysed reaction is L-methionyl-tRNA(fMet) + (6R)-10-formyltetrahydrofolate = N-formyl-L-methionyl-tRNA(fMet) + (6S)-5,6,7,8-tetrahydrofolate + H(+). Functionally, attaches a formyl group to the free amino group of methionyl-tRNA(fMet). The formyl group appears to play a dual role in the initiator identity of N-formylmethionyl-tRNA by promoting its recognition by IF2 and preventing the misappropriation of this tRNA by the elongation apparatus. This Escherichia coli O6:K15:H31 (strain 536 / UPEC) protein is Methionyl-tRNA formyltransferase.